The following is a 397-amino-acid chain: Subtilisin-like serine protease Pen ch 13.0101 (397 aa).

The first 19 residues, 1–19, serve as a signal peptide directing secretion; the sequence is MGFLKVLATSLATLAVVDA. Positions 20–115 are cleaved as a propeptide — removed in mature form; the sequence is GTLLTASNTD…IEPDMIVNAT (96 aa). The Inhibitor I9 domain maps to 35–113; sequence SYIVVMNDDV…KYIEPDMIVN (79 aa). The N-linked (GlcNAc...) asparagine glycan is linked to Asn-113. One can recognise a Peptidase S8 domain in the interval 125-397; that stretch reads SWGLARISSK…SKLLYNGINV (273 aa). Catalysis depends on charge relay system residues Asp-157 and His-188. 2 N-linked (GlcNAc...) asparagine glycosylation sites follow: Asn-249 and Asn-284. The Charge relay system role is filled by Ser-343.

Belongs to the peptidase S8 family.

Its subcellular location is the secreted. Functionally, serine protease. In Penicillium rubens, this protein is Subtilisin-like serine protease Pen ch 13.0101.